Here is a 315-residue protein sequence, read N- to C-terminus: FGFR1 oncogene partner 2 homolog (315 aa).

Coiled coils occupy residues 32–99 (EEAE…RAME) and 156–183 (VVQR…ISKQ). Disordered regions lie at residues 201–222 (KAVQ…SGAS) and 238–315 (PEQP…APAT). Residues 246 to 269 (GTTNSFNTAPVHSQSETQAPSVTL) are compositionally biased toward polar residues.

It belongs to the SIKE family.

This chain is FGFR1 oncogene partner 2 homolog, found in Drosophila melanogaster (Fruit fly).